The sequence spans 100 residues: MADSPVRPSMSHSYHCRIYVTLRPSVLDPAGTAVQSGLQQLGYDGVSQVRIGKYIELTLEAPDEATASQQLDTMCDQLLANTVIENYCFEITALEGAVTP.

This sequence belongs to the PurS family. In terms of assembly, homodimer. Part of the FGAM synthase complex composed of 1 PurL, 1 PurQ and 2 PurS subunits.

The protein localises to the cytoplasm. The catalysed reaction is N(2)-formyl-N(1)-(5-phospho-beta-D-ribosyl)glycinamide + L-glutamine + ATP + H2O = 2-formamido-N(1)-(5-O-phospho-beta-D-ribosyl)acetamidine + L-glutamate + ADP + phosphate + H(+). Its pathway is purine metabolism; IMP biosynthesis via de novo pathway; 5-amino-1-(5-phospho-D-ribosyl)imidazole from N(2)-formyl-N(1)-(5-phospho-D-ribosyl)glycinamide: step 1/2. Its function is as follows. Part of the phosphoribosylformylglycinamidine synthase complex involved in the purines biosynthetic pathway. Catalyzes the ATP-dependent conversion of formylglycinamide ribonucleotide (FGAR) and glutamine to yield formylglycinamidine ribonucleotide (FGAM) and glutamate. The FGAM synthase complex is composed of three subunits. PurQ produces an ammonia molecule by converting glutamine to glutamate. PurL transfers the ammonia molecule to FGAR to form FGAM in an ATP-dependent manner. PurS interacts with PurQ and PurL and is thought to assist in the transfer of the ammonia molecule from PurQ to PurL. This chain is Phosphoribosylformylglycinamidine synthase subunit PurS, found in Synechocystis sp. (strain ATCC 27184 / PCC 6803 / Kazusa).